The following is a 177-amino-acid chain: Large ribosomal subunit protein uL6 (177 aa).

The protein belongs to the universal ribosomal protein uL6 family. As to quaternary structure, part of the 50S ribosomal subunit.

Functionally, this protein binds to the 23S rRNA, and is important in its secondary structure. It is located near the subunit interface in the base of the L7/L12 stalk, and near the tRNA binding site of the peptidyltransferase center. The polypeptide is Large ribosomal subunit protein uL6 (Bordetella pertussis (strain Tohama I / ATCC BAA-589 / NCTC 13251)).